The primary structure comprises 751 residues: E3 ubiquitin-protein ligase SMURF2 (751 aa).

The C2 domain occupies 1-119 (MSNQGSRRNG…TGYQRLDLCK (119 aa)). Residues 157–190 (NDLPDGWEERRTASGRIQYLNHITRTTQWERPTR) enclose the WW 1 domain. Polar residues predominate over residues 214 to 226 (GTNGASCGQTSDP). Positions 214 to 236 (GTNGASCGQTSDPRISERRVRSQ) are disordered. 2 WW domains span residues 251-284 (PDLPEGYEQRTTQQGQVYFLHTQTGVSTWHDPRV) and 297-330 (GPLPPGWEIRNTATGRVYFVDHNNRTTQFTDPRL). One can recognise an HECT domain in the interval 417–751 (RPKDLWKRLM…IEETCGFAVE (335 aa)). The Glycyl thioester intermediate role is filled by C719.

The protein resides in the nucleus. It is found in the cytoplasm. The protein localises to the cell membrane. Its subcellular location is the membrane raft. It carries out the reaction S-ubiquitinyl-[E2 ubiquitin-conjugating enzyme]-L-cysteine + [acceptor protein]-L-lysine = [E2 ubiquitin-conjugating enzyme]-L-cysteine + N(6)-ubiquitinyl-[acceptor protein]-L-lysine.. The protein operates within protein modification; protein ubiquitination. In terms of biological role, E3 ubiquitin-protein ligase which accepts ubiquitin from an E2 ubiquitin-conjugating enzyme in the form of a thioester and then directly transfers the ubiquitin to targeted substrates. The protein is E3 ubiquitin-protein ligase SMURF2 (smurf2) of Xenopus laevis (African clawed frog).